We begin with the raw amino-acid sequence, 388 residues long: Succinyl-diaminopimelate desuccinylase (388 aa).

His-75 serves as a coordination point for Zn(2+). Residue Asp-77 is part of the active site. Asp-108 lines the Zn(2+) pocket. Glu-142 acts as the Proton acceptor in catalysis. Zn(2+)-binding residues include Glu-143, Glu-171, and His-361.

Belongs to the peptidase M20A family. DapE subfamily. Homodimer. The cofactor is Zn(2+). Co(2+) serves as cofactor.

The enzyme catalyses N-succinyl-(2S,6S)-2,6-diaminopimelate + H2O = (2S,6S)-2,6-diaminopimelate + succinate. It functions in the pathway amino-acid biosynthesis; L-lysine biosynthesis via DAP pathway; LL-2,6-diaminopimelate from (S)-tetrahydrodipicolinate (succinylase route): step 3/3. Functionally, catalyzes the hydrolysis of N-succinyl-L,L-diaminopimelic acid (SDAP), forming succinate and LL-2,6-diaminopimelate (DAP), an intermediate involved in the bacterial biosynthesis of lysine and meso-diaminopimelic acid, an essential component of bacterial cell walls. In Methylocella silvestris (strain DSM 15510 / CIP 108128 / LMG 27833 / NCIMB 13906 / BL2), this protein is Succinyl-diaminopimelate desuccinylase.